The following is a 155-amino-acid chain: Ribosome maturation factor RimP (155 aa).

It belongs to the RimP family.

It localises to the cytoplasm. Its function is as follows. Required for maturation of 30S ribosomal subunits. The sequence is that of Ribosome maturation factor RimP from Deinococcus geothermalis (strain DSM 11300 / CIP 105573 / AG-3a).